We begin with the raw amino-acid sequence, 377 residues long: G-protein coupled receptor 54 (377 aa).

Over 1–49 (MYSSEELWNSTEQVWINGSGTNFSLGRHEDDEEEEGDKHPFFTDAWLVP) the chain is Extracellular. N-linked (GlcNAc...) asparagine glycosylation is found at Asn9, Asn17, and Asn22. A helical transmembrane segment spans residues 50-70 (LFFSLIMLVGLVGNSLVIYVI). Residues 71–91 (SKHRQMRTATNFYIANLAATD) lie on the Cytoplasmic side of the membrane. A helical membrane pass occupies residues 92–112 (IIFLVCCVPFTATLYPLPGWI). At 113-119 (FGNFMCK) the chain is on the extracellular side. The cysteines at positions 118 and 198 are disulfide-linked. The chain crosses the membrane as a helical span at residues 120–140 (FVAFLQQVTVQATCITLTAMS). Residues 141 to 160 (GDRCYVTVYPLKSLRHRTPK) are Cytoplasmic-facing. The helical transmembrane segment at 161-181 (VAMIVSICIWIGSFVLSTPIL) threads the bilayer. Residues 182 to 209 (MYQRIEEGYWYGPRQYCMERFPSKTHER) are Extracellular-facing. A helical membrane pass occupies residues 210–230 (AFILYQFIAAYLLPVLTISFC). The Cytoplasmic portion of the chain corresponds to 231 to 269 (YTLMVKRVGQPTVEPVDNNYQVNLLSERTISIRSKVSKM). The chain crosses the membrane as a helical span at residues 270-290 (VVVIVLLFAICWGPIQIFVLF). The Extracellular portion of the chain corresponds to 291–305 (QSFYPNYQPNYATYK). The chain crosses the membrane as a helical span at residues 306–328 (IKTWANCMSYANSSVNPIVYGFM). Residues 329–377 (GASFQKSFRKTFPFLFKHKVRDSSMASRTANAEIKFVAAEEGNNNNAVN) lie on the Cytoplasmic side of the membrane.

Belongs to the G-protein coupled receptor 1 family. As to expression, expressed in a significantly high percentage (45-60%) of mature GnRH1, GnRH2, and GnRH3 neurons and in immature GnRH3 neurons, which had migrated to the vicinity of their final locations in the brain. Only 5% of immature GnRH1 and GnRH2 neurons have receptor transcripts.

Its subcellular location is the cell membrane. Receptor speculated to be essential for sexual development. May regulate gonadotropin-releasing hormone (GnRH) secretion. The receptor expression could be a 'stop signal' for GnRH1, GnRH2, and GnRH3 neuronal migration, leading to suppression of cell growth and modulation of GnRH secretion, which is important for normal sexual development. The chain is G-protein coupled receptor 54 (gpr54) from Oreochromis niloticus (Nile tilapia).